The primary structure comprises 227 residues: Translation initiation factor 6 (227 aa).

Belongs to the eIF-6 family.

Its function is as follows. Binds to the 50S ribosomal subunit and prevents its association with the 30S ribosomal subunit to form the 70S initiation complex. This chain is Translation initiation factor 6, found in Methanococcus maripaludis (strain C5 / ATCC BAA-1333).